A 435-amino-acid polypeptide reads, in one-letter code: ATP-dependent protease ATPase subunit HslU (435 aa).

Residues valine 18, 60 to 65 (GVGKTE), aspartate 248, glutamate 313, and arginine 385 contribute to the ATP site.

This sequence belongs to the ClpX chaperone family. HslU subfamily. As to quaternary structure, a double ring-shaped homohexamer of HslV is capped on each side by a ring-shaped HslU homohexamer. The assembly of the HslU/HslV complex is dependent on binding of ATP.

The protein resides in the cytoplasm. Functionally, ATPase subunit of a proteasome-like degradation complex; this subunit has chaperone activity. The binding of ATP and its subsequent hydrolysis by HslU are essential for unfolding of protein substrates subsequently hydrolyzed by HslV. HslU recognizes the N-terminal part of its protein substrates and unfolds these before they are guided to HslV for hydrolysis. This chain is ATP-dependent protease ATPase subunit HslU, found in Rhodospirillum rubrum (strain ATCC 11170 / ATH 1.1.1 / DSM 467 / LMG 4362 / NCIMB 8255 / S1).